Here is a 182-residue protein sequence, read N- to C-terminus: MQTDYAELVRRTIRSVPDWPTPGVTFRDITPVLQDPRTFRVLIDLFVYRYMRQRLDLVAGVDARGFIVGAVLAHELNLGFVPVRKKSKLPYRTVAEEYSLEYGNAAVEMHTDSVRTGQRVLLVDDLIDTGGTMLAAIKLLQRLGANVVEAAAIIDLPYLGGSAQITATGTPLYTVCQYQEGD.

Belongs to the purine/pyrimidine phosphoribosyltransferase family. Homodimer.

It is found in the cytoplasm. The enzyme catalyses AMP + diphosphate = 5-phospho-alpha-D-ribose 1-diphosphate + adenine. Its pathway is purine metabolism; AMP biosynthesis via salvage pathway; AMP from adenine: step 1/1. Functionally, catalyzes a salvage reaction resulting in the formation of AMP, that is energically less costly than de novo synthesis. This is Adenine phosphoribosyltransferase from Bordetella pertussis (strain Tohama I / ATCC BAA-589 / NCTC 13251).